A 403-amino-acid chain; its full sequence is S-adenosylmethionine synthase (403 aa).

His15 contacts ATP. Asp17 serves as a coordination point for Mg(2+). Glu43 contributes to the K(+) binding site. Residues Glu56 and Gln99 each contribute to the L-methionine site. Residues 99 to 109 (QSPDINQGVDR) form a flexible loop region. ATP-binding positions include 166-168 (DAK), 232-233 (KF), Asp241, 247-248 (RK), Ala264, and Lys268. An L-methionine-binding site is contributed by Asp241. Lys272 serves as a coordination point for L-methionine.

Belongs to the AdoMet synthase family. Homotetramer; dimer of dimers. It depends on Mg(2+) as a cofactor. K(+) serves as cofactor.

It localises to the cytoplasm. It catalyses the reaction L-methionine + ATP + H2O = S-adenosyl-L-methionine + phosphate + diphosphate. Its pathway is amino-acid biosynthesis; S-adenosyl-L-methionine biosynthesis; S-adenosyl-L-methionine from L-methionine: step 1/1. Its function is as follows. Catalyzes the formation of S-adenosylmethionine (AdoMet) from methionine and ATP. The overall synthetic reaction is composed of two sequential steps, AdoMet formation and the subsequent tripolyphosphate hydrolysis which occurs prior to release of AdoMet from the enzyme. The chain is S-adenosylmethionine synthase from Xanthomonas campestris pv. campestris (strain 8004).